Reading from the N-terminus, the 162-residue chain is Anaerobic nitrite reductase (162 aa).

S2 is modified (N-acetylserine). The 150-residue stretch at 9-158 (VFTEEQEALV…LVAAIKFEMK (150 aa)) folds into the Globin domain. The short motif at 42-46 (EIAPS) is the Homodimerization element. Heme b is bound by residues S52, K66, H70, R100, and H105. Positions 112–124 (NEHFEVTRFALLE) match the Homodimerization motif.

The protein belongs to the plant globin family. As to quaternary structure, homodimer with distinct heme coordination in each subunits. Heme b serves as cofactor. Root nodules.

The protein resides in the cytoplasm. It localises to the nucleus. It carries out the reaction Fe(III)-heme b-[protein] + nitric oxide + H2O = Fe(II)-heme b-[protein] + nitrite + 2 H(+). Functionally, phytoglobin that reduces nitrite to nitric oxide (NO) under anoxic conditions (e.g. during flooding or in waterlogged soil) and upon root nodulation. Required for general plant development and during nodulation, especially for the onset of symbiosis. Monitors nitric oxide (NO) levels during early phase of the nitrogen-fixing symbiosis and buffers oxygen in functioning nodules. May not function as an oxygen storage or transport protein. Has an unusually high affinity for O(2) through a hexacoordinate heme iron because of a very low dissociation constant. The sequence is that of Anaerobic nitrite reductase from Parasponia andersonii (Sponia andersonii).